A 372-amino-acid chain; its full sequence is N-acetyllactosaminide beta-1,3-N-acetylglucosaminyltransferase 3 (372 aa).

Over 1–10 the chain is Cytoplasmic; that stretch reads MKYLRHRRPN. The chain crosses the membrane as a helical; Signal-anchor for type II membrane protein span at residues 11–31; that stretch reads ATLILAIGAFTLLLFSLLVSP. The Lumenal portion of the chain corresponds to 32 to 372; sequence PTCKVQEQPP…LTCGNQTQIY (341 aa). N64, N184, N202, N362, and N367 each carry an N-linked (GlcNAc...) asparagine glycan.

This sequence belongs to the glycosyltransferase 31 family. Expressed in colon, jejunum, stomach, esophagus, placenta and trachea.

Its subcellular location is the golgi apparatus membrane. It catalyses the reaction a 3-O-{beta-D-galactosyl-(1-&gt;3)-[N-acetyl-beta-D-glucosaminyl-(1-&gt;6)]-N-acetyl-alpha-D-galactosaminyl}-L-threonyl-[protein] + UDP-N-acetyl-alpha-D-glucosamine = 3-O-{beta-D-GlcNAc-(1-&gt;3)-beta-D-Gal-(1-&gt;3)-[beta-D-GlcNAc-(1-&gt;6)]-alpha-D-GalNAc}-L-threonyl-[protein] + UDP + H(+). The catalysed reaction is 3-O-{beta-D-galactosyl-(1-&gt;3)-[N-acetyl-beta-D-glucosaminyl-(1-&gt;6)]-N-acetyl-alpha-D-galactosaminyl}-L-seryl-[protein] + UDP-N-acetyl-alpha-D-glucosamine = 3-O-{beta-D-GlcNAc-(1-&gt;3)-beta-D-Gal-(1-&gt;3)-[beta-D-GlcNAc-(1-&gt;6)]-alpha-D-GalNAc}-L-seryl-[protein] + UDP + H(+). The enzyme catalyses a beta-D-galactosyl-(1-&gt;4)-N-acetyl-beta-D-glucosaminyl derivative + UDP-N-acetyl-alpha-D-glucosamine = an N-acetyl-beta-D-glucosaminyl-(1-&gt;3)-beta-D-galactosyl-(1-&gt;4)-N-acetyl-beta-D-glucosaminyl derivative + UDP + H(+). It functions in the pathway protein modification; protein glycosylation. Its function is as follows. Beta-1,3-N-acetylglucosaminyltransferase involved in the synthesis of poly-N-acetyllactosamine. Has activity for type 2 oligosaccharides. Also acts as a core1-1,3-N-acetylglucosaminyltransferase (Core1-beta3GlcNAcT) to form the 6-sulfo sialyl Lewis x on extended core1 O-glycans. In Homo sapiens (Human), this protein is N-acetyllactosaminide beta-1,3-N-acetylglucosaminyltransferase 3 (B3GNT3).